A 166-amino-acid chain; its full sequence is NADH-quinone oxidoreductase subunit B 1 (166 aa).

[4Fe-4S] cluster contacts are provided by Cys39, Cys40, Cys106, and Cys135.

This sequence belongs to the complex I 20 kDa subunit family. As to quaternary structure, NDH-1 is composed of 14 different subunits. Subunits NuoB, C, D, E, F, and G constitute the peripheral sector of the complex. It depends on [4Fe-4S] cluster as a cofactor.

Its subcellular location is the cell membrane. It carries out the reaction a quinone + NADH + 5 H(+)(in) = a quinol + NAD(+) + 4 H(+)(out). In terms of biological role, NDH-1 shuttles electrons from NADH, via FMN and iron-sulfur (Fe-S) centers, to quinones in the respiratory chain. The immediate electron acceptor for the enzyme in this species is believed to be a menaquinone. Couples the redox reaction to proton translocation (for every two electrons transferred, four hydrogen ions are translocated across the cytoplasmic membrane), and thus conserves the redox energy in a proton gradient. This Symbiobacterium thermophilum (strain DSM 24528 / JCM 14929 / IAM 14863 / T) protein is NADH-quinone oxidoreductase subunit B 1.